The chain runs to 602 residues: Myotubularin (602 aa).

The segment at 1–40 is disordered; the sequence is MASSSASDCDAHPVERESMRKVSQDGVRQDMSKSGPRLPG. Residues 9–31 are compositionally biased toward basic and acidic residues; it reads CDAHPVERESMRKVSQDGVRQDM. Residue serine 18 is modified to Phosphoserine. In terms of domain architecture, GRAM spans 28–97; that stretch reads RQDMSKSGPR…GVISRIEKMG (70 aa). The region spanning 163 to 538 is the Myotubularin phosphatase domain; that stretch reads GWAIYNPVEE…RHLELWVNYY (376 aa). 3 residues coordinate a 1,2-diacyl-sn-glycero-3-phospho-(1D-myo-inositol-3,5-bisphosphate): asparagine 288, asparagine 313, and isoleucine 314. Residues asparagine 288, asparagine 313, and isoleucine 314 each contribute to the a 1,2-diacyl-sn-glycero-3-phospho-(1D-myo-inositol-3-phosphate) site. The active-site Phosphocysteine intermediate is the cysteine 375. The a 1,2-diacyl-sn-glycero-3-phospho-(1D-myo-inositol-3,5-bisphosphate) site is built by serine 376, aspartate 377, glycine 378, tryptophan 379, aspartate 380, arginine 381, lysine 417, and arginine 421. The a 1,2-diacyl-sn-glycero-3-phospho-(1D-myo-inositol-3-phosphate) site is built by serine 376, aspartate 377, glycine 378, tryptophan 379, aspartate 380, and arginine 381. Residue arginine 421 participates in a 1,2-diacyl-sn-glycero-3-phospho-(1D-myo-inositol-3-phosphate) binding. The residue at position 495 (threonine 495) is a Phosphothreonine. Over residues 578–592 the composition is skewed to polar residues; the sequence is PTKLTDSSTPPSGSA. Positions 578-602 are disordered; that stretch reads PTKLTDSSTPPSGSAQIAPRMQTHF.

This sequence belongs to the protein-tyrosine phosphatase family. Non-receptor class myotubularin subfamily. Heterodimer with MTMR12. Interacts with KMT2A/MLL1 (via SET domain). Interacts with DES in skeletal muscle but not in cardiac muscle. Interacts with SPEG.

The protein resides in the cytoplasm. It is found in the cell membrane. The protein localises to the cell projection. Its subcellular location is the filopodium. It localises to the ruffle. The protein resides in the late endosome. It is found in the myofibril. The protein localises to the sarcomere. It carries out the reaction a 1,2-diacyl-sn-glycero-3-phospho-(1D-myo-inositol-3-phosphate) + H2O = a 1,2-diacyl-sn-glycero-3-phospho-(1D-myo-inositol) + phosphate. The catalysed reaction is a 1,2-diacyl-sn-glycero-3-phospho-(1D-myo-inositol-3,5-bisphosphate) + H2O = a 1,2-diacyl-sn-glycero-3-phospho-(1D-myo-inositol-5-phosphate) + phosphate. It catalyses the reaction 1,2-dioctanoyl-sn-glycero-3-phospho-(1-D-myo-inositol-3-phosphate) + H2O = 1,2-dioctanoyl-sn-glycero-3-phospho-(1D-myo-inositol) + phosphate. The enzyme catalyses 1,2-dioctanoyl-sn-glycero-3-phospho-(1D-myo-inositol-3,5-bisphosphate) + H2O = 1,2-dioctanoyl-sn-glycero-3-phospho-(1D-myo-inositol-5-phosphate) + phosphate. It carries out the reaction 1,2-dihexadecanoyl-sn-glycero-3-phospho-(1D-myo-inositol-3,5-phosphate) + H2O = 1,2-dihexadecanoyl-sn-glycero-3-phospho-(1D-myo-inositol-5-phosphate) + phosphate. With respect to regulation, allosterically activated by phosphatidylinositol 5-phosphate (PI5P). Its function is as follows. Lipid phosphatase which dephosphorylates phosphatidylinositol 3-monophosphate (PI3P) and phosphatidylinositol 3,5-bisphosphate (PI(3,5)P2). Has also been shown to dephosphorylate phosphotyrosine- and phosphoserine-containing peptides. Negatively regulates EGFR degradation through regulation of EGFR trafficking from the late endosome to the lysosome. Plays a role in vacuolar formation and morphology. Regulates desmin intermediate filament assembly and architecture. Plays a role in mitochondrial morphology and positioning. Required for skeletal muscle maintenance but not for myogenesis. In skeletal muscles, stabilizes MTMR12 protein levels. The chain is Myotubularin from Rattus norvegicus (Rat).